The chain runs to 70 residues: DNA-directed RNA polymerase subunit epsilon (70 aa).

This sequence belongs to the RNA polymerase subunit epsilon family. In terms of assembly, RNAP is composed of a core of 2 alpha, a beta and a beta' subunit. The core is associated with a delta subunit, and at least one of epsilon or omega. When a sigma factor is associated with the core the holoenzyme is formed, which can initiate transcription.

It catalyses the reaction RNA(n) + a ribonucleoside 5'-triphosphate = RNA(n+1) + diphosphate. A non-essential component of RNA polymerase (RNAP). The protein is DNA-directed RNA polymerase subunit epsilon of Bacillus cereus (strain ZK / E33L).